We begin with the raw amino-acid sequence, 140 residues long: ATP synthase epsilon chain (140 aa).

This sequence belongs to the ATPase epsilon chain family. In terms of assembly, F-type ATPases have 2 components, CF(1) - the catalytic core - and CF(0) - the membrane proton channel. CF(1) has five subunits: alpha(3), beta(3), gamma(1), delta(1), epsilon(1). CF(0) has three main subunits: a, b and c.

It is found in the cell inner membrane. In terms of biological role, produces ATP from ADP in the presence of a proton gradient across the membrane. The sequence is that of ATP synthase epsilon chain from Chromobacterium violaceum (strain ATCC 12472 / DSM 30191 / JCM 1249 / CCUG 213 / NBRC 12614 / NCIMB 9131 / NCTC 9757 / MK).